A 116-amino-acid chain; its full sequence is Flagellar transcriptional regulator FlhD (116 aa).

The protein belongs to the FlhD family. Homodimer; disulfide-linked. Forms a heterohexamer composed of two FlhC and four FlhD subunits. Each FlhC binds a FlhD dimer, forming a heterotrimer, and a hexamer assembles by dimerization of two heterotrimers.

Its subcellular location is the cytoplasm. Its function is as follows. Functions in complex with FlhC as a master transcriptional regulator that regulates transcription of several flagellar and non-flagellar operons by binding to their promoter region. Activates expression of class 2 flagellar genes, including fliA, which is a flagellum-specific sigma factor that turns on the class 3 genes. Also regulates genes whose products function in a variety of physiological pathways. The chain is Flagellar transcriptional regulator FlhD from Salmonella arizonae (strain ATCC BAA-731 / CDC346-86 / RSK2980).